Consider the following 1978-residue polypeptide: Dedicator of cytokinesis protein 4 (1978 aa).

The region spanning 6-67 (EHEKYGVVIA…PSSYVHLKNA (62 aa)) is the SH3 domain. Tyr-167 carries the phosphotyrosine modification. Thr-193 is subject to Phosphothreonine. The 174-residue stretch at 401 to 574 (RNDLYITVER…ESFWITSFLC (174 aa)) folds into the C2 DOCK-type domain. The 407-residue stretch at 1199–1605 (KTELNKEEMY…FGIQEFPACI (407 aa)) folds into the DOCKER domain. Phosphoserine occurs at positions 1608, 1616, 1623, 1627, 1629, and 1640. 2 disordered regions span residues 1657–1738 (SQAS…IYPT) and 1751–1978 (IGDG…VSQL). The span at 1681–1712 (PSPSTSSLSSTHSASPNVTSSAPSSARASPLL) shows a compositional bias: low complexity. Residue Ser-1778 is modified to Phosphoserine. Positions 1797–1803 (PPVPPRP) match the SH3-binding motif. A compositionally biased stretch (polar residues) spans 1804 to 1818 (TQTASPARHTTSVSP). Residues 1842 to 1872 (SPGLSSNSPVLSGSYSSGISSLSRCSTSETS) are compositionally biased toward low complexity. Residues 1873–1882 (GFENQANEQS) are compositionally biased toward polar residues. The segment covering 1885 to 1895 (VPVPVPVPVPV) has biased composition (pro residues). Residues 1953-1966 (SHLENGTRRTEPGP) are compositionally biased toward basic and acidic residues.

The protein belongs to the DOCK family. As to quaternary structure, interacts with nucleotide-free Rap1; functions as a guanine nucleotide exchange factor (GEF) for Rap1. Interacts (via DOCKER domain) with RAC1; functions as a guanine nucleotide exchange factor (GEF) for RAC1. Interacts with the SH3 domain of CRK. Interacts with FASLG. Interacts with ELMO2 and EPHA2; mediates activation of RAC1 by EPHA2. Interacts with USH1C (via PDZ 1 domain). As to expression, expressed in inner ear (at protein level).

It localises to the cell membrane. Its subcellular location is the cytoplasm. It is found in the cytosol. Functions as a guanine nucleotide exchange factor (GEF) that promotes the exchange of GDP to GTP, converting inactive GDP-bound small GTPases into their active GTP-bound form. Involved in regulation of adherens junction between cells. Plays a role in cell migration. In terms of biological role, has a higher guanine nucleotide exchange factor activity compared to other isoforms. In Mus musculus (Mouse), this protein is Dedicator of cytokinesis protein 4 (Dock4).